The chain runs to 1098 residues: MFDILWNVGWSNGPPSWAEMERVLNGKPRHAGVPAFDADGDVPRSRKRGAYQPPGRERVGSSVAYAELHAHSAYSFLDGASTPEELVEEAARLGLCALALTDHDGLYGAVRFAEAAAELDVRTVFGAELSLGATARTERPDPPGPHLLVLARGPEGYRRLSRQLAAAHLAGGEKGKPRYDFDALTEAAGGHWHILTGCRKGHVRQALSQGGPAAAQRALADLVDRFTPSRVSIELTHHGHPLDDERNAALAGLAPRFGVGIVATTGAHFADPSRGRLAMAMAAIRARRSLDSAAGWLAPLGGAHLRSGEEMARLFAWCPEAVTAAAELGERCAFGLQLIAPRLPPFDVPDGHTEDSWLRSLVMAGARERYGPPKSAPRAYSQIEHELKVIAQLRFPGYFLVVHDITRFCRDNDILCQGRGSAANSAVCYALGVTAVDPVANELLFERFLSPARDGPPDIDIDIESDQREKVIQYVYHKYGRDYAAQVANVITYRGRSAVRDMARALGFSPGQQDAWSKQVSHWTGQADDVDGIPEQVIDLATQIRNLPRHLGIHSGGMVICDRPIADVCPVEWARMANRSVLQWDKDDCAAIGLVKFDLLGLGMLSALHYAKDLVAEHKGIEVDLARLDLSEPAVYEMLARADSVGVFQVESRAQMATLPRLKPRVFYDLVVEVALIRPGPIQGGSVHPYIRRRNGVDPVIYEHPSMAPALRKTLGVPLFQEQLMQLAVDCAGFSAAEADQLRRAMGSKRSTERMRRLRGRFYDGMRALHGAPDEVIDRIYEKLEAFANFGFPESHALSFASLVFYSAWFKLHHPAAFCAALLRAQPMGFYSPQSLVADARRHGVAVHGPCVNASLAHATCENAGTEVRLGLGAVRYLGAELAEKLVAERTANGPFTSLPDLTSRVQLSVPQVEALATAGALGCFGMSRREALWAAGAAATGRPDRLPGVGSSSHIPALPGMSELELAAADVWATGVSPDSYPTQFLRADLDAMGVLPAERLGSVSDGDRVLIAGAVTHRQRPATAQGVTFINLEDETGMVNVLCTPGVWARHRKLAHTAPALLIRGQVQNASGAITVVAERMGRLTLAVGARSRDFR.

The disordered stretch occupies residues 34–57 (PAFDADGDVPRSRKRGAYQPPGRE).

This sequence belongs to the DNA polymerase type-C family. DnaE2 subfamily.

It localises to the cytoplasm. The enzyme catalyses DNA(n) + a 2'-deoxyribonucleoside 5'-triphosphate = DNA(n+1) + diphosphate. Functionally, DNA polymerase involved in damage-induced mutagenesis and translesion synthesis (TLS). It is not the major replicative DNA polymerase. This is Error-prone DNA polymerase (dnaE2) from Mycobacterium tuberculosis (strain CDC 1551 / Oshkosh).